A 124-amino-acid polypeptide reads, in one-letter code: Group 1 truncated hemoglobin GlbN (124 aa).

3 residues coordinate heme: histidine 46, histidine 70, and histidine 117.

The protein belongs to the truncated hemoglobin family. Group I subfamily. Monomer. Heme is required as a cofactor.

Its function is as follows. Forms a very stable complex with oxygen. The oxygen dissociation rate is 0.011 sec(-1). The protein is Group 1 truncated hemoglobin GlbN (glbN) of Synechocystis sp. (strain ATCC 27184 / PCC 6803 / Kazusa).